The primary structure comprises 498 residues: Tyrosine 3-monooxygenase (498 aa).

Over residues 1–10 (MPTPSAPSPQ) the composition is skewed to pro residues. The tract at residues 1-31 (MPTPSAPSPQPKGFRRAVSEQDAKQAEAVTS) is disordered. Phosphoserine; by CaMK2 is present on Ser-19. Ser-31 is modified (phosphoserine). Ser-40 carries the phosphoserine; by CaMK2 and PKA modification. The Fe cation site is built by His-331, His-336, and Glu-376. A Phosphoserine modification is found at Ser-472.

The protein belongs to the biopterin-dependent aromatic amino acid hydroxylase family. In terms of assembly, homotetramer. Interacts (when phosphorylated at Ser-19) with YWHAG; one YWHAG dimer binds to one TH tetramer and this interaction may influence the phosphorylation and dephosphorylation of other sites. Interacts with NT5DC2; the interaction results in reduced phosphorylation and decreased catalytic activity of TH. The cofactor is Fe(2+). Phosphorylated on Ser-19, Ser-31 and Ser-40 by several protein kinases with different site specificities. Phosphorylation at Ser-31 and Ser-40 leads to an increase of TH activity. Phosphorylation at Ser-40 activates the enzyme and also counteracts the feedback inhibition of TH by catecholamines. Phosphorylation of Ser-19 and Ser-31 triggers the proteasomal degradation of TH through the ubiquitin-proteasome pathway. Phosphorylation at Ser-31 facilitates transport of TH from the soma to the nerve terminals via the microtubule network. Phosphorylation at Ser-19 induces the high-affinity binding to the 14-3-3 protein YWHAG; this interaction may influence the phosphorylation and dephosphorylation of other sites. Ser-19 increases the phosphorylation at Ser-40 in a hierarchical manner, leading to increased activity.

The protein localises to the cytoplasm. Its subcellular location is the perinuclear region. It is found in the nucleus. The protein resides in the cell projection. It localises to the axon. The protein localises to the cytoplasmic vesicle. Its subcellular location is the secretory vesicle. It is found in the synaptic vesicle. It carries out the reaction (6R)-L-erythro-5,6,7,8-tetrahydrobiopterin + L-tyrosine + O2 = (4aS,6R)-4a-hydroxy-L-erythro-5,6,7,8-tetrahydrobiopterin + L-dopa. It participates in catecholamine biosynthesis; dopamine biosynthesis; dopamine from L-tyrosine: step 1/2. Inhibited in feedback fashion by the catecholamine neurotransmitters, especially by dopamine in competition with tetrahydrobiopterin. Phosphorylation of several Ser/Thr residues in the N-terminus regulates the catalytic activity. Ser-31 and Ser-40 are readily phosphorylated to activate the catalytic activity. A cysteine modification induced by N-ethylmaleimide (NEM), inhibits tyrosine 3-monooxygenase activity through the modification of the Cys-177. Functionally, catalyzes the conversion of L-tyrosine to L-dihydroxyphenylalanine (L-Dopa), the rate-limiting step in the biosynthesis of catecholamines, dopamine, noradrenaline, and adrenaline. Uses tetrahydrobiopterin and molecular oxygen to convert tyrosine to L-Dopa. In addition to tyrosine, is able to catalyze the hydroxylation of phenylalanine and tryptophan but with lower specificity. Positively regulates the regression of retinal hyaloid vessels during postnatal development. The sequence is that of Tyrosine 3-monooxygenase (Th) from Rattus norvegicus (Rat).